Here is a 705-residue protein sequence, read N- to C-terminus: Phosphatidylinositol 4-phosphate 5-kinase 3 (705 aa).

MORN repeat units follow at residues 58–80 (YNGG…DGCM), 81–103 (YEGE…SGAT), 104–126 (YEGQ…DGDT), 127–149 (YRGH…NGDG), 150–172 (YQGN…DGNE), 173–195 (YVGE…NGNR), and 196–218 (YDGL…EEKT). The region spanning 321–701 (TVTAGHKNYD…RFRDFINKIF (381 aa)) is the PIPK domain. Residues 661–682 (YDITKKLEHAYKSLHADPASIS) form an activation loop region.

The protein resides in the cell membrane. It catalyses the reaction a 1,2-diacyl-sn-glycero-3-phospho-(1D-myo-inositol 4-phosphate) + ATP = a 1,2-diacyl-sn-glycero-3-phospho-(1D-myo-inositol-4,5-bisphosphate) + ADP + H(+). With DRP1A and DRP2B, required for the precise coordination of polar ARAC3/ROP6 and ARAC4/ROP2 placement and subsequent root hair positioning during planar polarity formation in root hair-forming cells, probably by mediating the correct basal-to-planar polarity switching of D6PK into the polar, lipid-enriched domain. This is Phosphatidylinositol 4-phosphate 5-kinase 3 from Arabidopsis thaliana (Mouse-ear cress).